Reading from the N-terminus, the 384-residue chain is Probable E3 ubiquitin-protein ligase rnf113 (384 aa).

The span at 1–11 (MDLFRKPKKRN) shows a compositional bias: basic residues. The disordered stretch occupies residues 1-96 (MDLFRKPKKR…GPSGPRDQGA (96 aa)). Residues 42-52 (PMVQSTKQLDA) show a composition bias toward polar residues. Residues 60 to 71 (SSDDSDDSDDNQ) are compositionally biased toward acidic residues. The C3H1-type zinc finger occupies 175 to 203 (DFAPDICKDYKETGFCTFGDSCKFVHDRS). The RING-type zinc finger occupies 241–279 (CFICGNPFVDPIVTKCKHYFCTGCALKSFQKSSKCPICQ). The interval 299–384 (KKQQQKQEAE…ESDDDDAEKD (86 aa)) is disordered. Composition is skewed to basic and acidic residues over residues 303 to 312 (QKQEAEKQEE) and 320 to 334 (EKPH…HDHE). Acidic residues predominate over residues 351–384 (EKSDEEQEIMMEDVEGLEGGENDSESDDDDAEKD).

The catalysed reaction is S-ubiquitinyl-[E2 ubiquitin-conjugating enzyme]-L-cysteine + [acceptor protein]-L-lysine = [E2 ubiquitin-conjugating enzyme]-L-cysteine + N(6)-ubiquitinyl-[acceptor protein]-L-lysine.. It functions in the pathway protein modification; protein ubiquitination. Its function is as follows. May function as E3 ubiquitin-protein ligase that catalyzes the transfer of ubiquitin onto target proteins. May play a role in DNA repair via its role in the synthesis of 'Lys-63'-linked polyubiquitin chains that recruit proteins involved in repair to sites of DNA damage by alkylating agents. This Caenorhabditis elegans protein is Probable E3 ubiquitin-protein ligase rnf113 (rnf-113).